We begin with the raw amino-acid sequence, 692 residues long: Proprotein convertase subtilisin/kexin type 9 (692 aa).

The signal sequence occupies residues 1-30 (MGTVSSRRSWWPLPLPLLLLLLLGPAGARA). Residues 31 to 152 (QEDEDGDYEE…IEEDSSVFAQ (122 aa)) constitute a propeptide that is removed on maturation. Tyr38 is modified (sulfotyrosine). Ser47 bears the Phosphoserine mark. In terms of domain architecture, Inhibitor I9 spans 77–149 (TYVVVLKEET…VDYIEEDSSV (73 aa)). The region spanning 155-444 (PWNLERITPA…VLTPNLVAAL (290 aa)) is the Peptidase S8 domain. Catalysis depends on charge relay system residues Asp186 and His226. Intrachain disulfides connect Cys223/Cys255 and Cys323/Cys358. Ser386 serves as the catalytic Charge relay system. A C-terminal domain region spans residues 450–692 (RAGWQLFCRT…HLVQASQELQ (243 aa)). 3 cysteine pairs are disulfide-bonded: Cys457–Cys527, Cys477–Cys526, and Cys486–Cys509. N-linked (GlcNAc...) asparagine glycosylation is present at Asn533. 6 cysteine pairs are disulfide-bonded: Cys534-Cys601, Cys552-Cys600, Cys562-Cys588, Cys608-Cys679, Cys626-Cys678, and Cys635-Cys654. At Ser688 the chain carries Phosphoserine.

It belongs to the peptidase S8 family. In terms of assembly, monomer. Can self-associate to form dimers and higher multimers which may have increased LDLR degrading activity. The precursor protein but not the mature protein may form multimers. Interacts with APOB, VLDLR, LRP8/APOER2 and BACE1. The full-length immature form (pro-PCSK9) interacts with SCNN1A, SCNN1B and SCNN1G. The pro-PCSK9 form (via C-terminal domain) interacts with LDLR. Interacts (via the C-terminal domain) with ANXA2 (via repeat Annexin 1); the interaction inhibits the degradation of LDLR. It depends on Ca(2+) as a cofactor. Cleavage by furin and PCSK5 generates a truncated inactive protein that is unable to induce LDLR degradation. Post-translationally, undergoes autocatalytic cleavage in the endoplasmic reticulum to release the propeptide from the N-terminus and the cleavage of the propeptide is strictly required for its maturation and activation. The cleaved propeptide however remains associated with the catalytic domain through non-covalent interactions, preventing potential substrates from accessing its active site. As a result, it is secreted from cells as a propeptide-containing, enzymatically inactive protein. In terms of processing, phosphorylation protects the propeptide against proteolysis.

Its subcellular location is the cytoplasm. It localises to the secreted. The protein resides in the endosome. It is found in the lysosome. The protein localises to the cell surface. Its subcellular location is the endoplasmic reticulum. It localises to the golgi apparatus. With respect to regulation, its proteolytic activity is autoinhibited by the non-covalent binding of the propeptide to the catalytic domain. Inhibited by EGTA. Crucial player in the regulation of plasma cholesterol homeostasis. Binds to low-density lipid receptor family members: low density lipoprotein receptor (LDLR), very low density lipoprotein receptor (VLDLR), apolipoprotein E receptor (LRP1/APOER) and apolipoprotein receptor 2 (LRP8/APOER2), and promotes their degradation in intracellular acidic compartments. Acts via a non-proteolytic mechanism to enhance the degradation of the hepatic LDLR through a clathrin LDLRAP1/ARH-mediated pathway. May prevent the recycling of LDLR from endosomes to the cell surface or direct it to lysosomes for degradation. Can induce ubiquitination of LDLR leading to its subsequent degradation. Inhibits intracellular degradation of APOB via the autophagosome/lysosome pathway in a LDLR-independent manner. Involved in the disposal of non-acetylated intermediates of BACE1 in the early secretory pathway. Inhibits epithelial Na(+) channel (ENaC)-mediated Na(+) absorption by reducing ENaC surface expression primarily by increasing its proteasomal degradation. Regulates neuronal apoptosis via modulation of LRP8/APOER2 levels and related anti-apoptotic signaling pathways. In Macaca nemestrina (Pig-tailed macaque), this protein is Proprotein convertase subtilisin/kexin type 9 (PCSK9).